We begin with the raw amino-acid sequence, 255 residues long: Indole-3-glycerol phosphate synthase (255 aa).

Belongs to the TrpC family.

It carries out the reaction 1-(2-carboxyphenylamino)-1-deoxy-D-ribulose 5-phosphate + H(+) = (1S,2R)-1-C-(indol-3-yl)glycerol 3-phosphate + CO2 + H2O. Its pathway is amino-acid biosynthesis; L-tryptophan biosynthesis; L-tryptophan from chorismate: step 4/5. This is Indole-3-glycerol phosphate synthase from Streptococcus pneumoniae serotype 19F (strain G54).